A 596-amino-acid polypeptide reads, in one-letter code: Elongation factor 4 (596 aa).

In terms of domain architecture, tr-type G spans 2–184; that stretch reads KHIRNFSIIA…VIVEQIPPPE (183 aa). GTP-binding positions include 14-19 and 131-134; these read DHGKST and NKID.

Belongs to the TRAFAC class translation factor GTPase superfamily. Classic translation factor GTPase family. LepA subfamily.

The protein localises to the cell inner membrane. It catalyses the reaction GTP + H2O = GDP + phosphate + H(+). In terms of biological role, required for accurate and efficient protein synthesis under certain stress conditions. May act as a fidelity factor of the translation reaction, by catalyzing a one-codon backward translocation of tRNAs on improperly translocated ribosomes. Back-translocation proceeds from a post-translocation (POST) complex to a pre-translocation (PRE) complex, thus giving elongation factor G a second chance to translocate the tRNAs correctly. Binds to ribosomes in a GTP-dependent manner. This is Elongation factor 4 from Shewanella pealeana (strain ATCC 700345 / ANG-SQ1).